A 143-amino-acid chain; its full sequence is Nucleoside diphosphate kinase (143 aa).

ATP-binding residues include K11, F59, R87, T93, R104, and N114. Catalysis depends on H117, which acts as the Pros-phosphohistidine intermediate.

Belongs to the NDK family. In terms of assembly, homotetramer. The cofactor is Mg(2+).

The protein resides in the cytoplasm. It carries out the reaction a 2'-deoxyribonucleoside 5'-diphosphate + ATP = a 2'-deoxyribonucleoside 5'-triphosphate + ADP. The enzyme catalyses a ribonucleoside 5'-diphosphate + ATP = a ribonucleoside 5'-triphosphate + ADP. In terms of biological role, major role in the synthesis of nucleoside triphosphates other than ATP. The ATP gamma phosphate is transferred to the NDP beta phosphate via a ping-pong mechanism, using a phosphorylated active-site intermediate. This is Nucleoside diphosphate kinase from Clostridium perfringens (strain ATCC 13124 / DSM 756 / JCM 1290 / NCIMB 6125 / NCTC 8237 / Type A).